The chain runs to 232 residues: Uracil-DNA glycosylase (232 aa).

The active-site Proton acceptor is aspartate 71.

The protein belongs to the uracil-DNA glycosylase (UDG) superfamily. UNG family.

It localises to the cytoplasm. The enzyme catalyses Hydrolyzes single-stranded DNA or mismatched double-stranded DNA and polynucleotides, releasing free uracil.. Functionally, excises uracil residues from the DNA which can arise as a result of misincorporation of dUMP residues by DNA polymerase or due to deamination of cytosine. The sequence is that of Uracil-DNA glycosylase from Azotobacter vinelandii (strain DJ / ATCC BAA-1303).